Here is a 152-residue protein sequence, read N- to C-terminus: Protein SprT-like (152 aa).

In terms of domain architecture, SprT-like spans 7–148 (QRLVEEVSLQ…GKCKGKLNLI (142 aa)). His-67 lines the Zn(2+) pocket. Glu-68 is a catalytic residue. His-71 is a Zn(2+) binding site.

The protein belongs to the SprT family. Zn(2+) serves as cofactor.

The protein resides in the cytoplasm. The sequence is that of Protein SprT-like from Bacillus anthracis (strain A0248).